A 242-amino-acid chain; its full sequence is ATP synthase subunit b (242 aa).

The next 2 membrane-spanning stretches (helical) occupy residues 8-28 (VLPF…ASAP) and 87-107 (LMDL…LIKF).

Belongs to the ATPase B chain family. F-type ATPases have 2 components, F(1) - the catalytic core - and F(0) - the membrane proton channel. F(1) has five subunits: alpha(3), beta(3), gamma(1), delta(1), epsilon(1). F(0) has three main subunits: a(1), b(2) and c(10-14). The alpha and beta chains form an alternating ring which encloses part of the gamma chain. F(1) is attached to F(0) by a central stalk formed by the gamma and epsilon chains, while a peripheral stalk is formed by the delta and b chains.

It is found in the cell inner membrane. F(1)F(0) ATP synthase produces ATP from ADP in the presence of a proton or sodium gradient. F-type ATPases consist of two structural domains, F(1) containing the extramembraneous catalytic core and F(0) containing the membrane proton channel, linked together by a central stalk and a peripheral stalk. During catalysis, ATP synthesis in the catalytic domain of F(1) is coupled via a rotary mechanism of the central stalk subunits to proton translocation. Its function is as follows. Component of the F(0) channel, it forms part of the peripheral stalk, linking F(1) to F(0). The sequence is that of ATP synthase subunit b from Desulfotalea psychrophila (strain LSv54 / DSM 12343).